A 159-amino-acid polypeptide reads, in one-letter code: uncharacterized protein (159 aa).

The next 2 membrane-spanning stretches (helical) occupy residues alanine 17 to valine 37 and leucine 40 to tyrosine 60.

The protein resides in the cell membrane. This is an uncharacterized protein from Borreliella burgdorferi (strain ATCC 35210 / DSM 4680 / CIP 102532 / B31) (Borrelia burgdorferi).